The primary structure comprises 551 residues: MVIIMSEAELKEAMKRNPHLRRYIENFKRTYMRIPDFMVSLSRELKELKYPNIIYPVGDPIFIHIFGTPETKTKYIVIEPTLETAEEKLKYKMILNKILELAPYEETPKSVEEFEEVLTRLFNACTKVTEAVGEEGFFQRIFRFADNKIKITPEERDKFLYILKRDLIGLGNLEPIGRDPYLEDIHVIGPKNCHVVHKIFGMLPTNITWEDEIELADYLKNLGERMGRPVSDANPIVDGTLPDGSRINIIYSTDVSPKGPSFTIRKFTDVPISVTQLISWGTFSTEVAAYLWLCLEYGMSIFICGETASGKTTTLNAILPFIKPNSKIFSCEDTPEVKPPHPVWQQLVTRERGPEESRVTLFDLLRAALRSRPNYIIVGEIRSVEAAVAFQAMQTGHPVLSTFHAANVRKMIQRLNGDPINVPLTFMDNLNVALFQLAVYQRGKVLRRVVSIEEIEGYYKEVDGVVTRAVFQWEPDKDRHVFTGRNNSYVLEEKIAKAAGYEDPRDIYNELELRARILEEMIAREIFDYYQVRDIIWAFYEKGLEGLPFPI.

It belongs to the GSP E family.

This is an uncharacterized protein from Methanocaldococcus jannaschii (strain ATCC 43067 / DSM 2661 / JAL-1 / JCM 10045 / NBRC 100440) (Methanococcus jannaschii).